A 65-amino-acid chain; its full sequence is Neurotoxin BmK-M3 (65 aa).

The 63-residue stretch at 2–64 (RDAYIAKPEN…VPIRVWGKCH (63 aa)) folds into the LCN-type CS-alpha/beta domain. 4 disulfides stabilise this stretch: cysteine 12/cysteine 63, cysteine 16/cysteine 36, cysteine 22/cysteine 46, and cysteine 26/cysteine 48.

The protein belongs to the long (4 C-C) scorpion toxin superfamily. Sodium channel inhibitor family. Alpha subfamily. As to expression, expressed by the venom gland.

The protein resides in the secreted. Binds to sodium channels (Nav) and inhibits the inactivation of the activated channels, thereby blocking neuronal transmission. This is Neurotoxin BmK-M3 from Olivierus martensii (Manchurian scorpion).